Reading from the N-terminus, the 183-residue chain is DELTA-miturgitoxin-Cp1a (183 aa).

A signal peptide spans 1–20 (MKFSLFFSVFFLAVLHACLS). Residues 21–47 (ESEIDLEDEEHFMSSDSFLSEIQDESR) constitute a propeptide that is removed on maturation. The Processing quadruplet motif motif lies at 44-47 (DESR). 8 disulfides stabilise this stretch: Cys-51/Cys-66, Cys-58/Cys-75, Cys-65/Cys-88, Cys-77/Cys-86, Cys-115/Cys-130, Cys-122/Cys-139, Cys-129/Cys-157, and Cys-141/Cys-155. Domain repeat units follow at residues 51–77 (CIERNKECTNDRHGCCRGKIFKDKCTC) and 115–141 (CVPKHADCSKRKDDCCKGGIFKYQCKC). Residues 51 to 141 (CIERNKECTN…GGIFKYQCKC (91 aa)) form a 2 X approximate repeats with cysteine pattern C-C-CC-C-C region. The segment at 164-177 (QAIEGALRIAKKLI) is predicted alpha-helix. Tryptophan amide is present on Trp-181.

This sequence belongs to the neurotoxin 19 (CSTX) family. Double-CSTX subfamily. Post-translationally, cleavage of the propeptide depends on the processing quadruplet motif (XXXR, with at least one of X being E). As to expression, expressed by the venom gland.

It is found in the secreted. It localises to the target cell membrane. Spider venom toxin that exhibits cytolytic activity by forming an alpha-helix across the membrane. Lethal to insect larvae. Causes instant paralysis and death in the larvae of the flesh fly (S.carnaria) at doses of 20 ug/g, at doses of less than 10 ug/g causes reversible paralysis. Has cytolytic activity against insect Sf9 cells. Causes stable and irreversible depolarization of fly muscle fibers, leading to contracture at higher toxin concentrations. Destabilizes membranes. The polypeptide is DELTA-miturgitoxin-Cp1a (Cheiracanthium punctorium (Yellow sac spider)).